The primary structure comprises 241 residues: Pyridoxine 5'-phosphate synthase (241 aa).

Residue Asn7 participates in 3-amino-2-oxopropyl phosphate binding. Position 9–10 (9–10 (DH)) interacts with 1-deoxy-D-xylulose 5-phosphate. Arg18 is a 3-amino-2-oxopropyl phosphate binding site. Catalysis depends on His43, which acts as the Proton acceptor. Positions 45 and 50 each coordinate 1-deoxy-D-xylulose 5-phosphate. Glu70 functions as the Proton acceptor in the catalytic mechanism. A 1-deoxy-D-xylulose 5-phosphate-binding site is contributed by Thr100. His191 (proton donor) is an active-site residue. 3-amino-2-oxopropyl phosphate-binding positions include Gly192 and 213–214 (GH).

This sequence belongs to the PNP synthase family. In terms of assembly, homooctamer; tetramer of dimers.

Its subcellular location is the cytoplasm. It carries out the reaction 3-amino-2-oxopropyl phosphate + 1-deoxy-D-xylulose 5-phosphate = pyridoxine 5'-phosphate + phosphate + 2 H2O + H(+). It participates in cofactor biosynthesis; pyridoxine 5'-phosphate biosynthesis; pyridoxine 5'-phosphate from D-erythrose 4-phosphate: step 5/5. Its function is as follows. Catalyzes the complicated ring closure reaction between the two acyclic compounds 1-deoxy-D-xylulose-5-phosphate (DXP) and 3-amino-2-oxopropyl phosphate (1-amino-acetone-3-phosphate or AAP) to form pyridoxine 5'-phosphate (PNP) and inorganic phosphate. This Nostoc punctiforme (strain ATCC 29133 / PCC 73102) protein is Pyridoxine 5'-phosphate synthase.